A 602-amino-acid chain; its full sequence is Prostaglandin G/H synthase 1 (602 aa).

Residues 1–26 (MSRRSLSLQFPLLLLLLLLPPPPVLL) form the signal peptide. Residues 34–72 (PVNPCCYYPCQNQGVCVRFGLDHYQCDCTRTGYSGPNCT) enclose the EGF-like domain. 4 disulfide bridges follow: C38–C49, C39–C161, C43–C59, and C61–C71. N-linked (GlcNAc...) asparagine glycans are attached at residues N70, N106, and N146. H209 acts as the Proton acceptor in catalysis. Y387 acts as the For cyclooxygenase activity in catalysis. H390 contacts heme b. Residue N412 is glycosylated (N-linked (GlcNAc...) asparagine). Residues C571 and C577 are joined by a disulfide bond.

It belongs to the prostaglandin G/H synthase family. Homodimer. Requires heme b as cofactor.

It is found in the microsome membrane. The protein resides in the endoplasmic reticulum membrane. It carries out the reaction (5Z,8Z,11Z,14Z)-eicosatetraenoate + AH2 + 2 O2 = prostaglandin H2 + A + H2O. The enzyme catalyses (5Z,8Z,11Z,14Z)-eicosatetraenoate + 2 O2 = prostaglandin G2. The catalysed reaction is prostaglandin G2 + AH2 = prostaglandin H2 + A + H2O. It catalyses the reaction (9Z,12Z)-octadecadienoate + AH2 + O2 = (9R)-hydroxy-(10E,12Z)-octadecadienoate + A + H2O. It carries out the reaction (9Z,12Z)-octadecadienoate + AH2 + O2 = (9S)-hydroxy-(10E,12Z)-octadecadienoate + A + H2O. The enzyme catalyses (9Z,12Z)-octadecadienoate + AH2 + O2 = (13S)-hydroxy-(9Z,11E)-octadecadienoate + A + H2O. The catalysed reaction is (9Z,12Z)-octadecadienoate + AH2 + O2 = (13R)-hydroxy-(9Z,11E)-octadecadienoate + A + H2O. The protein operates within lipid metabolism; prostaglandin biosynthesis. Its activity is regulated as follows. The cyclooxygenase activity is inhibited by nonsteroidal anti-inflammatory drugs (NSAIDs) including ibuprofen, flurbiprofen, ketoprofen, naproxen, flurbiprofen, anirolac, fenclofenac and diclofenac. In terms of biological role, dual cyclooxygenase and peroxidase that plays an important role in the biosynthesis pathway of prostanoids, a class of C20 oxylipins mainly derived from arachidonate ((5Z,8Z,11Z,14Z)-eicosatetraenoate, AA, C20:4(n-6)), with a particular role in the inflammatory response. The cyclooxygenase activity oxygenates AA to the hydroperoxy endoperoxide prostaglandin G2 (PGG2), and the peroxidase activity reduces PGG2 to the hydroxy endoperoxide prostaglandin H2 (PGH2), the precursor of all 2-series prostaglandins and thromboxanes. This complex transformation is initiated by abstraction of hydrogen at carbon 13 (with S-stereochemistry), followed by insertion of molecular O2 to form the endoperoxide bridge between carbon 9 and 11 that defines prostaglandins. The insertion of a second molecule of O2 (bis-oxygenase activity) yields a hydroperoxy group in PGG2 that is then reduced to PGH2 by two electrons. Involved in the constitutive production of prostanoids in particular in the stomach and platelets. In gastric epithelial cells, it is a key step in the generation of prostaglandins, such as prostaglandin E2 (PGE2), which plays an important role in cytoprotection. In platelets, it is involved in the generation of thromboxane A2 (TXA2), which promotes platelet activation and aggregation, vasoconstriction and proliferation of vascular smooth muscle cells. Can also use linoleate (LA, (9Z,12Z)-octadecadienoate, C18:2(n-6)) as substrate and produce hydroxyoctadecadienoates (HODEs) in a regio- and stereospecific manner, being (9R)-HODE ((9R)-hydroxy-(10E,12Z)-octadecadienoate) and (13S)-HODE ((13S)-hydroxy-(9Z,11E)-octadecadienoate) its major products. In Rattus norvegicus (Rat), this protein is Prostaglandin G/H synthase 1.